Here is a 106-residue protein sequence, read N- to C-terminus: Large ribosomal subunit protein uL24 (106 aa).

Residues 1-20 are disordered; it reads MNKRAKSKNREPLRKSPVKR. Positions 8–20 are enriched in basic and acidic residues; that stretch reads KNREPLRKSPVKR.

The protein belongs to the universal ribosomal protein uL24 family. As to quaternary structure, part of the 50S ribosomal subunit.

One of two assembly initiator proteins, it binds directly to the 5'-end of the 23S rRNA, where it nucleates assembly of the 50S subunit. In terms of biological role, one of the proteins that surrounds the polypeptide exit tunnel on the outside of the subunit. This chain is Large ribosomal subunit protein uL24, found in Methylacidiphilum infernorum (isolate V4) (Methylokorus infernorum (strain V4)).